Consider the following 390-residue polypeptide: Putative nickel insertion protein (390 aa).

It belongs to the LarC family.

In Geobacter metallireducens (strain ATCC 53774 / DSM 7210 / GS-15), this protein is Putative nickel insertion protein.